The primary structure comprises 427 residues: A-adding tRNA nucleotidyltransferase (427 aa).

49–52 (GTVR) is a binding site for ATP. Positions 62 and 64 each coordinate Mg(2+). Residues 136–137 (RD), N141, 181–190 (DPTRLLRGVR), R194, and R225 contribute to the ATP site.

Belongs to the tRNA nucleotidyltransferase/poly(A) polymerase family. The cofactor is Mg(2+).

The enzyme catalyses a tRNA with a 3' CC end + ATP = a tRNA with a 3' CCA end + diphosphate. Its function is as follows. tRNA nucleotidyltransferase involved in the synthesis of the tRNA CCA terminus. Adds the terminal adenosine residue to tRNA. This Halalkalibacterium halodurans (strain ATCC BAA-125 / DSM 18197 / FERM 7344 / JCM 9153 / C-125) (Bacillus halodurans) protein is A-adding tRNA nucleotidyltransferase.